The following is a 317-amino-acid chain: Probable methyltransferase tdiE (317 aa).

Belongs to the methyltransferase superfamily. LaeA methyltransferase family.

The protein operates within secondary metabolite biosynthesis. Functionally, probable methyltransferase; part of the gene cluster that mediates the biosynthesis of terrequinone A, an antitumor agent. The first step in the biosynthetic pathway for terrequinone A is formation of indole pyruvic acid (IPA) from L-tryptophan by the aminotransferase tdiD. The nonribosomal peptide synthase tdiA then immediately converts unstable IPA to didemethylasterriquinone D (DDAQ D), via condensation of 2 IPA molecules. The symmetric connectivity of the 2 IPA molecules is thought to arise by head-to-tail dual Claisen condensations facilitated by the TE domain. TdiB then catalyzes reverse prenylation by transferring dimethylallyl diphosphate to carbon atom 2' of DDAQ D, to yield asterriquinone C-1. Finally, tdiC and tdiE enzymes robustly convert asterriquinone C-1 to terrequinone A via a transformation involving regular prenylation at carbon atom 5, which requires elimination of the hydroxy group on C-5. This chain is Probable methyltransferase tdiE, found in Emericella nidulans (strain FGSC A4 / ATCC 38163 / CBS 112.46 / NRRL 194 / M139) (Aspergillus nidulans).